A 1392-amino-acid polypeptide reads, in one-letter code: DNA-directed RNA polymerase subunit beta (1392 aa).

Belongs to the RNA polymerase beta chain family. In terms of assembly, the RNAP catalytic core consists of 2 alpha, 1 beta, 1 beta' and 1 omega subunit. When a sigma factor is associated with the core the holoenzyme is formed, which can initiate transcription.

It carries out the reaction RNA(n) + a ribonucleoside 5'-triphosphate = RNA(n+1) + diphosphate. In terms of biological role, DNA-dependent RNA polymerase catalyzes the transcription of DNA into RNA using the four ribonucleoside triphosphates as substrates. This Neisseria gonorrhoeae (strain NCCP11945) protein is DNA-directed RNA polymerase subunit beta.